Consider the following 279-residue polypeptide: Alcohol dehydrogenase-related 31 kDa protein (279 aa).

11 to 34 lines the NAD(+) pocket; it reads YVADCGGIALETSKVLMTKNIAKL. Serine 139 is a binding site for substrate. The active-site Proton acceptor is the tyrosine 152.

This sequence belongs to the short-chain dehydrogenases/reductases (SDR) family.

In Drosophila madeirensis (Fruit fly), this protein is Alcohol dehydrogenase-related 31 kDa protein (Adhr).